Consider the following 426-residue polypeptide: 3',5'-cyclic-nucleotide phosphodiesterase (426 aa).

Residues 210–229 are disordered; the sequence is DKEDAQHHSNSNSNSNNIWG.

This sequence belongs to the cyclic nucleotide phosphodiesterase class-II family.

It catalyses the reaction a nucleoside 3',5'-cyclic phosphate + H2O = a nucleoside 5'-phosphate + H(+). In Candida albicans (Yeast), this protein is 3',5'-cyclic-nucleotide phosphodiesterase (PDE1).